A 261-amino-acid polypeptide reads, in one-letter code: tRNA pseudouridine synthase A (261 aa).

Catalysis depends on Asp51, which acts as the Nucleophile. Tyr109 contributes to the substrate binding site.

Belongs to the tRNA pseudouridine synthase TruA family. In terms of assembly, homodimer.

It carries out the reaction uridine(38/39/40) in tRNA = pseudouridine(38/39/40) in tRNA. In terms of biological role, formation of pseudouridine at positions 38, 39 and 40 in the anticodon stem and loop of transfer RNAs. This is tRNA pseudouridine synthase A from Shewanella baltica (strain OS223).